We begin with the raw amino-acid sequence, 305 residues long: Serine/threonine-protein phosphatase ppe1 (305 aa).

Positions 51, 53, 79, and 111 each coordinate Mn(2+). Catalysis depends on His-112, which acts as the Proton donor. The Mn(2+) site is built by His-161 and His-235.

Belongs to the PPP phosphatase family. PP-6 (PP-V) subfamily. Interacts with sts5, ekc1 and mis12. Requires Mn(2+) as cofactor.

It localises to the nucleus. It carries out the reaction O-phospho-L-seryl-[protein] + H2O = L-seryl-[protein] + phosphate. The enzyme catalyses O-phospho-L-threonyl-[protein] + H2O = L-threonyl-[protein] + phosphate. Has a role in chromosome segregation. May provide a dynamic connection between kinetochore microtubules and kinetochore chromatin. Negatively regulates mis12. The sequence is that of Serine/threonine-protein phosphatase ppe1 (ppe1) from Schizosaccharomyces pombe (strain 972 / ATCC 24843) (Fission yeast).